The sequence spans 327 residues: 2-methoxy-6-polyprenyl-1,4-benzoquinol methylase, mitochondrial (327 aa).

A mitochondrion-targeting transit peptide spans 1–49 (MAAPRSCVLWSYCGHGWSRLAGDCRLPGFRRSWLGATLSARSLSQEKRA). S-adenosyl-L-methionine-binding positions include Thr117, Asp171, and 199-200 (DA).

It belongs to the class I-like SAM-binding methyltransferase superfamily. MenG/UbiE family. As to quaternary structure, component of a multi-subunit COQ enzyme complex, composed of at least COQ3, COQ4, COQ5, COQ6, COQ7 and COQ9. Interacts with PYURF; the interaction is direct, stabilizes COQ5 protein and associates PYURF with COQ enzyme complex.

It is found in the mitochondrion inner membrane. The enzyme catalyses 2-methoxy-6-(all-trans-decaprenyl)benzene-1,4-diol + S-adenosyl-L-methionine = 5-methoxy-2-methyl-3-(all-trans-decaprenyl)benzene-1,4-diol + S-adenosyl-L-homocysteine + H(+). It participates in cofactor biosynthesis; ubiquinone biosynthesis. Methyltransferase required for the conversion of 2-decaprenyl-6-methoxy-1,4-benzoquinol (DDMQH2) to 2-decaprenyl-3-methyl-6-methoxy-1,4-benzoquinol (DMQH2). This is 2-methoxy-6-polyprenyl-1,4-benzoquinol methylase, mitochondrial from Rattus norvegicus (Rat).